Consider the following 258-residue polypeptide: Snake venom serine protease PTLE1 (258 aa).

An N-terminal signal peptide occupies residues 1-18 (MVLIRVLANLLILQLSYA). A propeptide spanning residues 19-24 (QKSSEL) is cleaved from the precursor. A Peptidase S1 domain is found at 25 to 249 (VIGGDECNIN…YTDWIENIIA (225 aa)). Disulfide bonds link Cys-31-Cys-163, Cys-50-Cys-66, Cys-98-Cys-256, Cys-142-Cys-210, Cys-174-Cys-189, and Cys-200-Cys-225. N-linked (GlcNAc...) asparagine glycosylation occurs at Asn-44. His-65 serves as the catalytic Charge relay system. Asn-79 and Asn-103 each carry an N-linked (GlcNAc...) asparagine glycan. The active-site Charge relay system is the Asp-110. Asn-121 carries N-linked (GlcNAc...) asparagine glycosylation. Ser-204 (charge relay system) is an active-site residue.

This sequence belongs to the peptidase S1 family. Snake venom subfamily. As to quaternary structure, monomer. In terms of tissue distribution, expressed by the venom gland.

The protein resides in the secreted. Its function is as follows. Snake venom serine protease that may act in the hemostasis system of the prey. In Gloydius halys (Chinese water mocassin), this protein is Snake venom serine protease PTLE1.